Consider the following 643-residue polypeptide: E3 ubiquitin-protein ligase Praja-1 (643 aa).

The interval 1 to 363 is disordered; it reads MGQESSKPVW…SDDYYKYCDE (363 aa). Basic and acidic residues-rich tracts occupy residues 95–105, 145–158, and 173–183; these read DYSRYPPREYR, KFKD…EKGA, and RDVREERDKLD. Low complexity predominate over residues 200-209; it reads QSSVASQSSS. Residues 213–227 show a composition bias toward basic and acidic residues; sequence LATKGDSSERERREQ. Phosphoserine is present on Ser265. The residue at position 277 (Thr277) is a Phosphothreonine. 2 stretches are compositionally biased toward basic and acidic residues: residues 289-310 and 320-362; these read RWRD…RGRG and KYPE…KYCD. Ser365 and Ser367 each carry phosphoserine. Residues 380 to 454 are disordered; sequence RSREQTLSSS…REPSLQEEQA (75 aa). A compositionally biased stretch (low complexity) spans 410 to 439; it reads SASTGTSPGPGASASAGAGAGASAGSNGSN. Residues 595-636 form an RING-type zinc finger; that stretch reads CPICCSEYVKGEVATELPCHHYFHKPCVSIWLQKSGTCPVCR.

As to quaternary structure, binds ubiquitin-conjugating enzymes (E2s). In vitro, interacts with the ubiquitin-conjugating enzyme, UBE2D2. Post-translationally, substrate for E2-dependent ubiquitination. As to expression, expressed in various regions of the brain including the cerebellum, cerebral cortex, medulla, occipital pole, frontal lobe, temporal lobe and putamen. Highest levels in the cerebral cortex.

The enzyme catalyses S-ubiquitinyl-[E2 ubiquitin-conjugating enzyme]-L-cysteine + [acceptor protein]-L-lysine = [E2 ubiquitin-conjugating enzyme]-L-cysteine + N(6)-ubiquitinyl-[acceptor protein]-L-lysine.. Has E2-dependent E3 ubiquitin-protein ligase activity. Ubiquitinates MAGED1 antigen leading to its subsequent degradation by proteasome. May be involved in protein sorting. The protein is E3 ubiquitin-protein ligase Praja-1 (PJA1) of Homo sapiens (Human).